The sequence spans 383 residues: Transposase InsI for insertion sequence element IS30A (383 aa).

Residues 213–379 form the Integrase catalytic domain; it reads VNGTPIHERS…TPKEIIERGV (167 aa).

Belongs to the transposase IS30 family.

Its function is as follows. Required for the transposition of the insertion element. In Escherichia coli (strain K12), this protein is Transposase InsI for insertion sequence element IS30A (insI1).